The following is a 226-amino-acid chain: Large ribosomal subunit protein uL1 (226 aa).

It belongs to the universal ribosomal protein uL1 family. In terms of assembly, part of the 50S ribosomal subunit.

In terms of biological role, binds directly to 23S rRNA. The L1 stalk is quite mobile in the ribosome, and is involved in E site tRNA release. Functionally, protein L1 is also a translational repressor protein, it controls the translation of the L11 operon by binding to its mRNA. This chain is Large ribosomal subunit protein uL1, found in Treponema denticola (strain ATCC 35405 / DSM 14222 / CIP 103919 / JCM 8153 / KCTC 15104).